Reading from the N-terminus, the 101-residue chain is Osteocalcin (101 aa).

Residues 1 to 18 form the signal peptide; sequence MKLAIVLLLLGLAVLCLG. Positions 19–52 are excised as a propeptide; sequence GKDSQHSASAGDSRSSEAFISRQDSANFARRHKR. In terms of domain architecture, Gla spans 53-99; that stretch reads SYRYNVARGAAVTSPLESQREVCELNPDCDELADHIGFQEAYRRFYG. Glu69, Glu73, Glu76, and Asp82 together coordinate Ca(2+). Glu69, Glu73, and Glu76 each carry 4-carboxyglutamate. Cys75 and Cys81 form a disulfide bridge.

The protein belongs to the osteocalcin/matrix Gla protein family. Post-translationally, gamma-carboxyglutamate residues are formed by vitamin K dependent carboxylation by GGCX. These residues are essential for the binding of calcium.

It is found in the secreted. Its function is as follows. The carboxylated form is one of the main organic components of the bone matrix, which constitutes 1-2% of the total bone protein. The carboxylated form binds strongly to apatite and calcium. This is Osteocalcin (bglap) from Xenopus tropicalis (Western clawed frog).